The chain runs to 160 residues: UPF0262 protein Oant_0325 (160 aa).

It belongs to the UPF0262 family.

In Brucella anthropi (strain ATCC 49188 / DSM 6882 / CCUG 24695 / JCM 21032 / LMG 3331 / NBRC 15819 / NCTC 12168 / Alc 37) (Ochrobactrum anthropi), this protein is UPF0262 protein Oant_0325.